Reading from the N-terminus, the 223-residue chain is Adenylate kinase 4, mitochondrial (223 aa).

15-20 (GSGKGT) is an a ribonucleoside 5'-triphosphate binding site. Residues 35-64 (SSGHFLRENIKASTEVGEMAKQYIEKSLLV) are NMP. Serine 36 and arginine 41 together coordinate AMP. Position 60 is an N6-succinyllysine (lysine 60). AMP-binding positions include 62 to 64 (LLV), 89 to 92 (GFPR), and glutamine 96. Residues 125 to 162 (RRWIHPPSGRVYNLDFNPPHVHGIDDVTGEPLVQQEDD) form an LID region. A ribonucleoside 5'-triphosphate contacts are provided by residues arginine 126 and 135-136 (VY). Arginine 170 serves as a coordination point for AMP. Residue lysine 175 is modified to N6-acetyllysine. N6-acetyllysine; alternate is present on residues lysine 179 and lysine 186. An N6-succinyllysine; alternate mark is found at lysine 179 and lysine 186. Threonine 199 lines the a ribonucleoside 5'-triphosphate pocket.

Belongs to the adenylate kinase family. AK3 subfamily. Monomer. Interacts with SLC25A5/ANT2. Highly expressed in kidney, moderately expressed in heart and liver and weakly expressed in brain.

The protein resides in the mitochondrion matrix. The catalysed reaction is a ribonucleoside 5'-phosphate + ATP = a ribonucleoside 5'-diphosphate + ADP. The enzyme catalyses AMP + ATP = 2 ADP. It catalyses the reaction GTP + AMP = GDP + ADP. It carries out the reaction CMP + ATP = CDP + ADP. The catalysed reaction is GTP + CMP = CDP + GDP. The enzyme catalyses dAMP + ATP = dADP + ADP. It catalyses the reaction dCMP + ATP = dCDP + ADP. It carries out the reaction a 2'-deoxyribonucleoside 5'-diphosphate + ATP = a 2'-deoxyribonucleoside 5'-triphosphate + ADP. The catalysed reaction is a ribonucleoside 5'-diphosphate + ATP = a ribonucleoside 5'-triphosphate + ADP. The enzyme catalyses GDP + ATP = GTP + ADP. It catalyses the reaction CDP + GTP = CTP + GDP. It carries out the reaction CDP + ATP = CTP + ADP. The catalysed reaction is UDP + ATP = UTP + ADP. The enzyme catalyses GTP + UDP = UTP + GDP. It catalyses the reaction dADP + GTP = dATP + GDP. It carries out the reaction dCDP + GTP = dCTP + GDP. The catalysed reaction is dCDP + ATP = dCTP + ADP. The enzyme catalyses dGDP + ATP = dGTP + ADP. It catalyses the reaction dTDP + GTP = dTTP + GDP. It carries out the reaction dTDP + ATP = dTTP + ADP. Its function is as follows. Broad-specificity mitochondrial nucleoside phosphate kinase involved in cellular nucleotide homeostasis by catalyzing nucleoside-phosphate interconversions. Similar to other adenylate kinases, preferentially catalyzes the phosphorylation of the nucleoside monophosphate AMP with ATP as phosphate donor to produce ADP. Phosphorylates only AMP when using GTP as phosphate donor. In vitro, can also catalyze the phosphorylation of CMP, dAMP and dCMP and use GTP as an alternate phosphate donor. Moreover, exhibits a diphosphate kinase activity, producing ATP, CTP, GTP, UTP, TTP, dATP, dCTP and dGTP from the corresponding diphosphate substrates with either ATP or GTP as phosphate donors. Plays a role in controlling cellular ATP levels by regulating phosphorylation and activation of the energy sensor protein kinase AMPK. Plays a protective role in the cellular response to oxidative stress. The protein is Adenylate kinase 4, mitochondrial of Homo sapiens (Human).